Here is a 131-residue protein sequence, read N- to C-terminus: Global transcriptional regulator Spx (131 aa).

A disulfide bond links C10 and C13.

The protein belongs to the ArsC family. Spx subfamily. Interacts with the C-terminal domain of the alpha subunit of the RNAP.

It localises to the cytoplasm. Global transcriptional regulator that plays a key role in stress response and exerts either positive or negative regulation of genes. Acts by interacting with the C-terminal domain of the alpha subunit of the RNA polymerase (RNAP). This interaction can enhance binding of RNAP to the promoter region of target genes and stimulate their transcription, or block interaction of RNAP with activator. The polypeptide is Global transcriptional regulator Spx (Shouchella clausii (strain KSM-K16) (Alkalihalobacillus clausii)).